The sequence spans 782 residues: Transcription factor SOX-30 (782 aa).

Disordered stretches follow at residues 1–37, 95–117, and 139–226; these read MERARPEPPPPPPPPPRQPPRPTPPRPLRPAPPAQPV, LPPGGPGVPPAPDEGAAAAAAAA, and PPQS…DALK. Composition is skewed to pro residues over residues 7-35 and 97-106; these read EPPPPPPPPPRQPPRPTPPRPLRPAPPAQ and PGGPGVPPAP. Positions 203-226 are enriched in basic and acidic residues; sequence LDGRRSDEKKAKLEAEEAPRDALK. A DNA-binding region (HMG box) is located at residues 366–434; sequence VKRPMNAFMV…KHREEFPGWV (69 aa). Disordered stretches follow at residues 501–604, 704–724, and 756–782; these read PTPA…STCP, YPDEHTHSEDSRSCESMDGPP, and ASAPSGVQQVNVTDSDEEEEEKVLRNL. Over residues 512–522 the composition is skewed to polar residues; it reads TLFQPSVSSTG. Positions 525–538 are enriched in pro residues; sequence AVPPPSLTPRPSLP. A compositionally biased stretch (polar residues) spans 555–574; the sequence is SGSSRSVKRSTPGSLESTTR. The segment covering 704 to 718 has biased composition (basic and acidic residues); that stretch reads YPDEHTHSEDSRSCE.

Interacts with CTNNB1, competitively inhibiting CTNNB1-TCF7L2/TCF4 interaction. As to expression, expressed in the lung (at protein level). Expressed in testes (at protein level). Expressed in preleptotene spermatocytes, round spermatids, and elongated spermatids in the testis (at protein level). Expressed in pachytene spermatocytes during stages 3 to 8 of spermatogenesis (at protein level). Increased expression in diplotene spermatocytes at stage 9-11 and in metaphase spermatocytes or secondary spermatocytes at stage 12. Expressed in ovaries.

Its subcellular location is the nucleus. The protein localises to the cytoplasm. Its function is as follows. Acts both as a transcriptional activator and a repressor. Binds to the DNA sequence 5'-ACAAT-3' and shows a preference for guanine residues surrounding this core motif. Binds to its own promoter and activates its own transcription. Required to activate the expression of postmeiotic genes involved in spermiogenesis. Binds to the promoter region of CTNNB1 and represses its transcription which leads to inhibition of Wnt signaling. Also inhibits Wnt signaling by binding to the CTNNB1 protein, preventing interaction of CTNNB1 with TCF7L2/TCF4. This Mus musculus (Mouse) protein is Transcription factor SOX-30 (Sox30).